The primary structure comprises 100 residues: Small ubiquitin-related modifier 1 (100 aa).

The region spanning 19 to 96 is the Ubiquitin-like domain; sequence EYIKLKVIGQ…IEVYQEQTGG (78 aa). G96 is covalently cross-linked (Glycyl lysine isopeptide (Gly-Lys) (interchain with K-? in acceptor proteins)). Residues 97–100 constitute a propeptide that is removed on maturation; that stretch reads CRND.

This sequence belongs to the ubiquitin family. SUMO subfamily. Interacts with sae2, ube2i, ranbp2, pias1 and pias2. Covalently attached to a number of proteins. In terms of processing, cleavage of precursor form by a sentrin-specific protease is necessary for function.

It is found in the nucleus membrane. Its subcellular location is the nucleus speckle. The protein resides in the cytoplasm. The protein localises to the nucleus. It localises to the PML body. It is found in the cell membrane. In terms of biological role, ubiquitin-like protein that can be covalently attached to proteins as a monomer or a lysine-linked polymer. Covalent attachment via an isopeptide bond to its substrates requires prior activation by the E1 complex sae1-sae2 and linkage to the E2 enzyme ube2i. This post-translational modification on lysine residues of proteins plays a crucial role in a number of cellular processes such as nuclear transport, DNA replication and repair, mitosis and signal transduction. Polymeric sumo1 chains are also susceptible to polyubiquitination which functions as a signal for proteasomal degradation of modified proteins. This is Small ubiquitin-related modifier 1 (sumo1) from Danio rerio (Zebrafish).